The primary structure comprises 326 residues: Beta-ketoacyl-[acyl-carrier-protein] synthase III (326 aa).

Catalysis depends on residues Cys-115 and His-253. Positions 254-258 (QANKR) are ACP-binding. Residue Asn-283 is part of the active site.

It belongs to the thiolase-like superfamily. FabH family. As to quaternary structure, homodimer.

It is found in the cytoplasm. The catalysed reaction is malonyl-[ACP] + acetyl-CoA + H(+) = 3-oxobutanoyl-[ACP] + CO2 + CoA. It functions in the pathway lipid metabolism; fatty acid biosynthesis. In terms of biological role, catalyzes the condensation reaction of fatty acid synthesis by the addition to an acyl acceptor of two carbons from malonyl-ACP. Catalyzes the first condensation reaction which initiates fatty acid synthesis and may therefore play a role in governing the total rate of fatty acid production. Possesses both acetoacetyl-ACP synthase and acetyl transacylase activities. Its substrate specificity determines the biosynthesis of branched-chain and/or straight-chain of fatty acids. The protein is Beta-ketoacyl-[acyl-carrier-protein] synthase III of Bradyrhizobium diazoefficiens (strain JCM 10833 / BCRC 13528 / IAM 13628 / NBRC 14792 / USDA 110).